The sequence spans 479 residues: Transmembrane protein 161A (479 aa).

The signal sequence occupies residues 1–28; it reads MAVLGVQLVVTLLTATLMHRLAPHCSFA. Over 29–98 the chain is Extracellular; sequence RWLLCNGSLF…LTTVDALVLR (70 aa). Asn34 is a glycosylation site (N-linked (GlcNAc...) asparagine). Ser69 carries the phosphoserine modification. The helical transmembrane segment at 99–119 threads the bilayer; the sequence is FFLEYQWFVDFAVYSGGVYLF. The Cytoplasmic segment spans residues 120–134; sequence TEAYYYMLGPAKETN. The helical transmembrane segment at 135–155 threads the bilayer; the sequence is IAVFWCLLTVTFSIKMFLTVT. The Extracellular portion of the chain corresponds to 156–166; it reads RLYFSAEEGGE. The helical transmembrane segment at 167–187 threads the bilayer; sequence RSVCLTFAFLFLLLAMLVQVV. Residues 188 to 224 are Cytoplasmic-facing; the sequence is REETLELGLEPGLASMTQNLEPLLKKQGWDWALPVAK. Residues 225–245 form a helical membrane-spanning segment; the sequence is LAIRVGLAVVGSVLGAFLTFP. Over 246 to 263 the chain is Extracellular; the sequence is GLRLAQTHRDALTMSEDR. Residues 264–284 traverse the membrane as a helical segment; sequence PMLQFLLHTSFLSPLFILWLW. Residues 285–304 are Cytoplasmic-facing; sequence TKPIARDFLHQPPFGETRFS. The chain crosses the membrane as a helical span at residues 305 to 325; the sequence is LLSDSAFDSGRLWLLVVLCLL. Over 326-370 the chain is Extracellular; sequence RLAVTRPHLQAYLCLAKARVEQLRREAGRIEAREIQQRVVRVYCY. The chain crosses the membrane as a helical span at residues 371–391; it reads VTVVSLQYLTPLILTLNCTLL. The Cytoplasmic portion of the chain corresponds to 392–449; it reads LKTLGGYSWGLGPAPLLSPDPSSASAAPIGSGEDEVQQTAARIAGALGGLLTPLFLRG. A helical membrane pass occupies residues 450–470; it reads VLAYLIWWTAACQLLASLFGL. The Extracellular segment spans residues 471–479; it reads YFHQHLAGS.

The protein belongs to the TMEM161 family.

The protein resides in the membrane. May play a role in protection against oxidative stress. Overexpression leads to reduced levels of oxidant-induced DNA damage and apoptosis. The polypeptide is Transmembrane protein 161A (TMEM161A) (Homo sapiens (Human)).